The sequence spans 374 residues: tRNA-specific 2-thiouridylase MnmA (374 aa).

ATP-binding positions include 12-19 and Met-38; that span reads GMSGGVDS. An interaction with target base in tRNA region spans residues 98 to 100; sequence NPD. Cys-103 functions as the Nucleophile in the catalytic mechanism. The cysteines at positions 103 and 202 are disulfide-linked. Gly-128 serves as a coordination point for ATP. The tract at residues 152 to 154 is interaction with tRNA; the sequence is KDQ. The active-site Cysteine persulfide intermediate is the Cys-202. Positions 316–317 are interaction with tRNA; sequence RY.

The protein belongs to the MnmA/TRMU family.

Its subcellular location is the cytoplasm. The enzyme catalyses S-sulfanyl-L-cysteinyl-[protein] + uridine(34) in tRNA + AH2 + ATP = 2-thiouridine(34) in tRNA + L-cysteinyl-[protein] + A + AMP + diphosphate + H(+). Functionally, catalyzes the 2-thiolation of uridine at the wobble position (U34) of tRNA, leading to the formation of s(2)U34. This is tRNA-specific 2-thiouridylase MnmA from Vibrio vulnificus (strain YJ016).